Reading from the N-terminus, the 446-residue chain is Tubulin beta-6 chain (446 aa).

Residues 1–4 (MREI) carry the MREI motif motif. GTP is bound by residues Gln-11, Glu-69, Ser-138, Gly-142, Thr-143, and Gly-144. Glu-69 serves as a coordination point for Mg(2+). Ser-172 carries the phosphoserine; by CDK1 modification. GTP is bound by residues Asn-204 and Asn-226. Glu-438 is modified (5-glutamyl polyglutamate).

It belongs to the tubulin family. Dimer of alpha and beta chains. A typical microtubule is a hollow water-filled tube with an outer diameter of 25 nm and an inner diameter of 15 nM. Alpha-beta heterodimers associate head-to-tail to form protofilaments running lengthwise along the microtubule wall with the beta-tubulin subunit facing the microtubule plus end conferring a structural polarity. Microtubules usually have 13 protofilaments but different protofilament numbers can be found in some organisms and specialized cells. Mg(2+) serves as cofactor. In terms of processing, some glutamate residues at the C-terminus are polyglycylated, resulting in polyglycine chains on the gamma-carboxyl group. Glycylation is mainly limited to tubulin incorporated into axonemes (cilia and flagella) whereas glutamylation is prevalent in neuronal cells, centrioles, axonemes, and the mitotic spindle. Both modifications can coexist on the same protein on adjacent residues, and lowering polyglycylation levels increases polyglutamylation, and reciprocally. Cilia and flagella glycylation is required for their stability and maintenance. Flagella glycylation controls sperm motility. Post-translationally, some glutamate residues at the C-terminus are polyglutamylated, resulting in polyglutamate chains on the gamma-carboxyl group. Polyglutamylation plays a key role in microtubule severing by spastin (SPAST). SPAST preferentially recognizes and acts on microtubules decorated with short polyglutamate tails: severing activity by SPAST increases as the number of glutamates per tubulin rises from one to eight, but decreases beyond this glutamylation threshold. Glutamylation is also involved in cilia motility. Phosphorylated on Ser-172 by CDK1 during the cell cycle, from metaphase to telophase, but not in interphase. This phosphorylation inhibits tubulin incorporation into microtubules.

The protein resides in the cytoplasm. Its subcellular location is the cytoskeleton. Tubulin is the major constituent of microtubules, a cylinder consisting of laterally associated linear protofilaments composed of alpha- and beta-tubulin heterodimers. Microtubules grow by the addition of GTP-tubulin dimers to the microtubule end, where a stabilizing cap forms. Below the cap, tubulin dimers are in GDP-bound state, owing to GTPase activity of alpha-tubulin. The protein is Tubulin beta-6 chain (TUBB6) of Bos taurus (Bovine).